Consider the following 262-residue polypeptide: Lysosomal-associated transmembrane protein 5 (262 aa).

5 consecutive transmembrane segments (helical) span residues 19 to 39, 64 to 84, 92 to 112, 134 to 154, and 184 to 204; these read IATT…FIEH, ISSF…LIGV, LLPF…TLLG, FPLM…LCSS, and FIKM…FKVY. Y259 bears the Phosphotyrosine mark.

This sequence belongs to the LAPTM4/LAPTM5 transporter family. In terms of assembly, binds to ubiquitin. Preferentially expressed in adult hematopoietic tissues. High levels in lymphoid and myeloid tissues. Highly expressed in peripheral blood leukocytes, thymus, spleen and lung, followed by placenta, liver and kidney.

Its subcellular location is the lysosome membrane. May have a special functional role during embryogenesis and in adult hematopoietic cells. The sequence is that of Lysosomal-associated transmembrane protein 5 (LAPTM5) from Homo sapiens (Human).